Here is a 473-residue protein sequence, read N- to C-terminus: MSKGQVIQVMGPVVDVKFEGGNLPEIYNALVIEYKSDAEEAPTSQLTLEVAIQLGDDVVRTIAMASTDGVQRGMEVIDTGSPITVPVGTVTLGRVFNVLGNTIDLDEPLPSDIKRNKIHREAPTFDQLATTTEILETGIKVVDLLAPYLKGGKIGLFGGAGVGKTVLIQELIHNIAQEHGGISVFAGVGERTREGNDLYFEMKDSGVIEKTAMVFGQMNEPPGARMRVALTGLTIAEYFRDEEHQDVLLFIDNIFRFTQAGSEVSALLGRMPSAVGYQPTLATEMGQLQERITSTNVGSVTSIQAIYVPADDYTDPAPATTFAHLDATTNLERKLTEQGIYPAVDPLASTSRALSPDIVGEEHYAVATEVQRLLQRYKELQDIIAILGMDELSDEDKQSVSRARRVQFFLSQNFHVAEQFTGQKGSYVPVKETVKGFKDLLAGKYDHIPEDAFRSVGRIEEVLEKAKDMGVEV.

Residue Gly158–Thr165 participates in ATP binding.

This sequence belongs to the ATPase alpha/beta chains family. In terms of assembly, F-type ATPases have 2 components, CF(1) - the catalytic core - and CF(0) - the membrane proton channel. CF(1) has five subunits: alpha(3), beta(3), gamma(1), delta(1), epsilon(1). CF(0) has three main subunits: a(1), b(2) and c(9-12). The alpha and beta chains form an alternating ring which encloses part of the gamma chain. CF(1) is attached to CF(0) by a central stalk formed by the gamma and epsilon chains, while a peripheral stalk is formed by the delta and b chains.

The protein resides in the cell membrane. It carries out the reaction ATP + H2O + 4 H(+)(in) = ADP + phosphate + 5 H(+)(out). Functionally, produces ATP from ADP in the presence of a proton gradient across the membrane. The catalytic sites are hosted primarily by the beta subunits. This Listeria welshimeri serovar 6b (strain ATCC 35897 / DSM 20650 / CCUG 15529 / CIP 8149 / NCTC 11857 / SLCC 5334 / V8) protein is ATP synthase subunit beta 2.